Consider the following 588-residue polypeptide: MKAAAKTQKPKRQEEHANFISWRFALLCGCILLALAFLLGRVAWLQVISPDMLVKEGDMRSLRVQQVSTSRGMITDRSGRPLAVSVPVKAIWADPKEVHDAGGISVGDRWKALANALNIPLDQLSARINANPKGRFIYLARQVNPDMADYIKKLKLPGIHLREESRRYYPSGEVTAHLIGFTNVDSQGIEGVEKSFDKWLTGQPGERIVRKDRYGRVIEDISSTDSQAAHNLALSIDERLQALVYRELNNAVAFNKAESGSAVLVDVNTGEVLAMANSPSYNPNNLSGTPKEAMRNRTITDVFEPGSTVKPMVVMTALQRGVVRENSVLNTIPYRINGHEIKDVARYSELTLTGVLQKSSNVGVSKLALAMPSSALVDTYSRFGLGKATNLGLVGERSGLYPQKQRWSDIERATFSFGYGLMVTPLQLARVYATIGSYGIYRPLSITKVDPPVPGERVFPESIVRTVVHMMESVALPGGGGVKAAIKGYRIAIKTGTAKKVGPDGRYINKYIAYTAGVAPASQPRFALVVVINDPQAGKYYGGAVSAPVFGAIMGGVLRTMNIEPDALTTGDKNEFVINQGEGTGGRS.

A helical membrane pass occupies residues 19-39 (FISWRFALLCGCILLALAFLL). Ser-307 functions as the Acyl-ester intermediate in the catalytic mechanism. The propeptide occupies 578 to 588 (INQGEGTGGRS).

It belongs to the transpeptidase family. FtsI subfamily.

The protein resides in the cell inner membrane. The catalysed reaction is Preferential cleavage: (Ac)2-L-Lys-D-Ala-|-D-Ala. Also transpeptidation of peptidyl-alanyl moieties that are N-acyl substituents of D-alanine.. It participates in cell wall biogenesis; peptidoglycan biosynthesis. Functionally, catalyzes cross-linking of the peptidoglycan cell wall at the division septum. The sequence is that of Peptidoglycan D,D-transpeptidase FtsI from Escherichia coli O157:H7.